The sequence spans 219 residues: Putative mediator of RNA polymerase II transcription subunit 10 (219 aa).

The segment covering 1-39 (MEQQQPQQQNDGQQQQQQQQQHQQQQQQQQQQQQQQQQS) has biased composition (low complexity). 2 disordered regions span residues 1-42 (MEQQ…SEQE) and 177-219 (KETQ…INNN). Coiled coils occupy residues 13–74 (QQQQ…VVEE) and 166–219 (EYAE…INNN). Over residues 177–192 (KETQEQQNDDQIKVDD) the composition is skewed to basic and acidic residues. The segment covering 194–219 (NNNNNNNNNNNYNNNNNNNNNNINNN) has biased composition (low complexity).

It belongs to the Mediator complex subunit 10 family. As to quaternary structure, component of the Mediator complex.

Its subcellular location is the nucleus. Component of the Mediator complex, a coactivator involved in the regulated transcription of nearly all RNA polymerase II-dependent genes. Mediator functions as a bridge to convey information from gene-specific regulatory proteins to the basal RNA polymerase II transcription machinery. Mediator is recruited to promoters by direct interactions with regulatory proteins and serves as a scaffold for the assembly of a functional preinitiation complex with RNA polymerase II and the general transcription factors. The sequence is that of Putative mediator of RNA polymerase II transcription subunit 10 (med10) from Dictyostelium discoideum (Social amoeba).